The primary structure comprises 342 residues: MSAFTPASEVLLRHSDDFEQSRILFAGDLQDDLPARFECAASRAYTQQFHHWQALSRQMGDNVRFSLVAQASDVADCDTLIYYWPKNKPEAQFQLMNILSLMPVGSDVFVVGENRSGVRSAEPMLADYAPLNKVDSARRCGLYHGRLEKQPQFSLESWWAEYNIDGLTIKTLPGVFSRDGLDVGSQLLLSTLTPHTKGKVLDVGCGAGVLSAALASHSPKVRLTLCDVSAPAVEASRATLAANGLEGEVFASNVFSEVKGRFDMIISNPPFHDGMQTSLDAAQTLIRGAVRHLNSGGELRIVANAFLPYPKILDETFGFHEVIAQTGRFKVYRIVMTRQAKK.

It belongs to the methyltransferase superfamily. RsmC family. Monomer.

The protein localises to the cytoplasm. It carries out the reaction guanosine(1207) in 16S rRNA + S-adenosyl-L-methionine = N(2)-methylguanosine(1207) in 16S rRNA + S-adenosyl-L-homocysteine + H(+). Specifically methylates the guanine in position 1207 of 16S rRNA in the 30S particle. The protein is Ribosomal RNA small subunit methyltransferase C of Salmonella typhi.